We begin with the raw amino-acid sequence, 68 residues long: ATP synthase F(0) complex subunit 8 (68 aa).

A helical transmembrane segment spans residues 8–24 (TWLITILSMILTLLIVF). An N6-acetyllysine; alternate modification is found at K54. Residue K54 is modified to N6-succinyllysine; alternate. Residue K57 is modified to N6-acetyllysine.

It belongs to the ATPase protein 8 family. Component of the ATP synthase complex composed at least of ATP5F1A/subunit alpha, ATP5F1B/subunit beta, ATP5MC1/subunit c (homooctomer), MT-ATP6/subunit a, MT-ATP8/subunit 8, ATP5ME/subunit e, ATP5MF/subunit f, ATP5MG/subunit g, ATP5MK/subunit k, ATP5MJ/subunit j, ATP5F1C/subunit gamma, ATP5F1D/subunit delta, ATP5F1E/subunit epsilon, ATP5PF/subunit F6, ATP5PB/subunit b, ATP5PD/subunit d, ATP5PO/subunit OSCP. ATP synthase complex consists of a soluble F(1) head domain (subunits alpha(3) and beta(3)) - the catalytic core - and a membrane F(0) domain - the membrane proton channel (subunits c, a, 8, e, f, g, k and j). These two domains are linked by a central stalk (subunits gamma, delta, and epsilon) rotating inside the F1 region and a stationary peripheral stalk (subunits F6, b, d, and OSCP). Interacts with PRICKLE3.

It localises to the mitochondrion membrane. In terms of biological role, subunit 8, of the mitochondrial membrane ATP synthase complex (F(1)F(0) ATP synthase or Complex V) that produces ATP from ADP in the presence of a proton gradient across the membrane which is generated by electron transport complexes of the respiratory chain. ATP synthase complex consist of a soluble F(1) head domain - the catalytic core - and a membrane F(1) domain - the membrane proton channel. These two domains are linked by a central stalk rotating inside the F(1) region and a stationary peripheral stalk. During catalysis, ATP synthesis in the catalytic domain of F(1) is coupled via a rotary mechanism of the central stalk subunits to proton translocation. In vivo, can only synthesize ATP although its ATP hydrolase activity can be activated artificially in vitro. Part of the complex F(0) domain. The protein is ATP synthase F(0) complex subunit 8 of Lemur catta (Ring-tailed lemur).